Reading from the N-terminus, the 431-residue chain is Adenylosuccinate synthetase (431 aa).

Residues 12–18 (GDEGKGK) and 40–42 (GHT) each bind GTP. D13 serves as the catalytic Proton acceptor. Mg(2+)-binding residues include D13 and G40. Residues 13 to 16 (DEGK), 38 to 41 (NAGH), T130, R144, Q225, T240, and R304 contribute to the IMP site. The Proton donor role is filled by H41. Substrate is bound at residue 300–306 (ATTGRPR). GTP-binding positions include R306, 332 to 334 (KLD), and 414 to 416 (SVG).

This sequence belongs to the adenylosuccinate synthetase family. In terms of assembly, homodimer. It depends on Mg(2+) as a cofactor.

It localises to the cytoplasm. The catalysed reaction is IMP + L-aspartate + GTP = N(6)-(1,2-dicarboxyethyl)-AMP + GDP + phosphate + 2 H(+). It participates in purine metabolism; AMP biosynthesis via de novo pathway; AMP from IMP: step 1/2. Its function is as follows. Plays an important role in the de novo pathway of purine nucleotide biosynthesis. Catalyzes the first committed step in the biosynthesis of AMP from IMP. The protein is Adenylosuccinate synthetase of Geotalea uraniireducens (strain Rf4) (Geobacter uraniireducens).